A 212-amino-acid polypeptide reads, in one-letter code: Thymidylate kinase (212 aa).

10-17 (GLEGAGKT) serves as a coordination point for ATP.

It belongs to the thymidylate kinase family.

The enzyme catalyses dTMP + ATP = dTDP + ADP. Functionally, phosphorylation of dTMP to form dTDP in both de novo and salvage pathways of dTTP synthesis. This chain is Thymidylate kinase, found in Baumannia cicadellinicola subsp. Homalodisca coagulata.